Here is a 313-residue protein sequence, read N- to C-terminus: N(5)-(carboxyethyl)ornithine synthase (313 aa).

The pyruvate site is built by R15, K71, and H92. 171-176 serves as a coordination point for NADP(+); that stretch reads GSGNVA.

This sequence belongs to the AlaDH/PNT family. CEOS subfamily. As to quaternary structure, homotetramer.

The enzyme catalyses N(5)-[1(S)-1-carboxyethyl]-L-ornithine + NADP(+) + H2O = L-ornithine + pyruvate + NADPH + H(+). Is potently inhibited by the reaction product N(5)-(L-1-carboxyethyl)-L-ornithine. In terms of biological role, catalyzes the NADPH-dependent reductive condensation between pyruvic acid and the side chain amino group of L-ornithine to form N(5)-(L-1-carboxyethyl)-L-ornithine. To a lesser extent, can also use L-lysine as substrate (yielding N(6)-(L-1-carboxyethyl)-L-lysine). NADH cannot replace NADPH in the condensation reaction. This chain is N(5)-(carboxyethyl)ornithine synthase (ceo), found in Lactococcus lactis subsp. lactis (Streptococcus lactis).